A 69-amino-acid polypeptide reads, in one-letter code: Guanine nucleotide-binding protein subunit gamma (69 aa).

Ser2 is modified (N-acetylserine). Residue Cys66 is modified to Cysteine methyl ester. Cys66 carries S-geranylgeranyl cysteine lipidation. A propeptide spans 67-69 (removed in mature form); it reads SVL.

This sequence belongs to the G protein gamma family. G proteins are composed of 3 units, alpha, beta and gamma. Interacts with gpbA, and this requires phlp1. This protein is thought to be subject to lipidation, and this requires phlp1.

It is found in the cell membrane. Guanine nucleotide-binding proteins (G proteins) are involved as a modulator or transducer in various transmembrane signaling systems. This major G-protein of the squid photoreceptor is involved in visual transduction. The beta and gamma chains are required for the GTPase activity, for replacement of GDP by GTP, and for G protein-effector interaction. Required for normal chemotaxis in response to cAMP. This Dictyostelium discoideum (Social amoeba) protein is Guanine nucleotide-binding protein subunit gamma (gpgA).